The primary structure comprises 304 residues: tRNA pseudouridine synthase B (304 aa).

D48 (nucleophile) is an active-site residue.

Belongs to the pseudouridine synthase TruB family. Type 1 subfamily.

It carries out the reaction uridine(55) in tRNA = pseudouridine(55) in tRNA. Functionally, responsible for synthesis of pseudouridine from uracil-55 in the psi GC loop of transfer RNAs. The polypeptide is tRNA pseudouridine synthase B (Pseudomonas aeruginosa (strain UCBPP-PA14)).